Consider the following 354-residue polypeptide: Uroporphyrinogen decarboxylase (354 aa).

Substrate is bound by residues 27–31 (RQAGR), Asp-77, Tyr-154, Ser-209, and His-327.

It belongs to the uroporphyrinogen decarboxylase family. In terms of assembly, homodimer.

The protein localises to the cytoplasm. It carries out the reaction uroporphyrinogen III + 4 H(+) = coproporphyrinogen III + 4 CO2. It functions in the pathway porphyrin-containing compound metabolism; protoporphyrin-IX biosynthesis; coproporphyrinogen-III from 5-aminolevulinate: step 4/4. In terms of biological role, catalyzes the decarboxylation of four acetate groups of uroporphyrinogen-III to yield coproporphyrinogen-III. This is Uroporphyrinogen decarboxylase from Shewanella pealeana (strain ATCC 700345 / ANG-SQ1).